Here is a 350-residue protein sequence, read N- to C-terminus: Histidinol-phosphate aminotransferase (350 aa).

N6-(pyridoxal phosphate)lysine is present on Lys210.

The protein belongs to the class-II pyridoxal-phosphate-dependent aminotransferase family. Histidinol-phosphate aminotransferase subfamily. As to quaternary structure, homodimer. Requires pyridoxal 5'-phosphate as cofactor.

The catalysed reaction is L-histidinol phosphate + 2-oxoglutarate = 3-(imidazol-4-yl)-2-oxopropyl phosphate + L-glutamate. It participates in amino-acid biosynthesis; L-histidine biosynthesis; L-histidine from 5-phospho-alpha-D-ribose 1-diphosphate: step 7/9. The polypeptide is Histidinol-phosphate aminotransferase (Pseudomonas syringae pv. syringae (strain B728a)).